A 281-amino-acid polypeptide reads, in one-letter code: Lectin CaBo (281 aa).

The N-terminal stretch at 1 to 29 is a signal peptide; that stretch reads MAISKKSSLYLPIFTFITMLLMVVNKVSS. Asp119 is a Ca(2+) binding site. Arg139 contributes to the a carbohydrate binding site. Residues 149–163 constitute a propeptide, removed in mature form; that stretch reads IIKNSTTIDFNAAYN. Mn(2+)-binding residues include Glu171 and Asp173. Residues Asp173, Tyr175, Asn177, and Asp182 each coordinate Ca(2+). Tyr175 provides a ligand contact to a carbohydrate. 2 residues coordinate Mn(2+): Asp182 and His187. Position 262 to 263 (262 to 263) interacts with a carbohydrate; the sequence is LY.

The protein belongs to the leguminous lectin family. Equilibrium between homodimer and homotetramer. The mature chain consists of residues 164-281 followed by residues 30-148. Concanavalin A-like lectins of the Diocleinae subtribe undergo proteolytic processing referred to as circular permutation. The propeptide is split into an N-terminal and a C-terminal part, the gamma and beta chain, respectively. These are then religated in beta-gamma order to form the mature alpha chain. The beta and gamma chains can often be detected in cell extracts.

In terms of biological role, D-mannose-specific lectin. The protein is Lectin CaBo of Canavalia bonariensis.